The following is a 134-amino-acid chain: ATP synthase epsilon chain (134 aa).

Belongs to the ATPase epsilon chain family. In terms of assembly, F-type ATPases have 2 components, CF(1) - the catalytic core - and CF(0) - the membrane proton channel. CF(1) has five subunits: alpha(3), beta(3), gamma(1), delta(1), epsilon(1). CF(0) has three main subunits: a, b and c.

Its subcellular location is the cell membrane. Functionally, produces ATP from ADP in the presence of a proton gradient across the membrane. This chain is ATP synthase epsilon chain, found in Listeria innocua serovar 6a (strain ATCC BAA-680 / CLIP 11262).